The sequence spans 865 residues: TATA box-binding protein-associated factor RNA polymerase I subunit B (865 aa).

The segment at 1–33 adopts an RRN7-type zinc-finger fold; sequence MHSAKNEKCNACGGYRFSVNDGFKYCDRCGALF. The Zn(2+) site is built by Cys-9, Cys-12, Cys-26, and Cys-29. A B-reader region spans residues 35–99; the sequence is NFEELEEEEG…DFLQQQAIKG (65 aa). The segment at 100–111 is B-linker; sequence EELELPHDATPD. An N-terminal cyclin fold region spans residues 112–348; it reads YLYRLALRLF…SQPERMKQGE (237 aa). The interval 233–261 is disordered; the sequence is DEDGDQDAQGGQQLDDLTLETTQNPDESI. The segment covering 239–248 has biased composition (low complexity); that stretch reads DAQGGQQLDD. Polar residues predominate over residues 252–261; it reads ETTQNPDESI. The C-terminal cyclin fold stretch occupies residues 349 to 496; that stretch reads VVKPTIVDYA…LLTLRLTFQL (148 aa).

It belongs to the RRN7/TAF1B family.

It is found in the nucleus. It localises to the nucleolus. Component of RNA polymerase I core factor complex that acts as a GTF2B/TFIIB-like factor and plays a key role in multiple steps during transcription initiation such as pre-initiation complex (PIC) assembly and postpolymerase recruitment events in polymerase I (Pol I) transcription. Binds rDNA promoters and plays a role in Pol I recruitment. The protein is TATA box-binding protein-associated factor RNA polymerase I subunit B of Caenorhabditis elegans.